The sequence spans 411 residues: 2,3-bisphosphoglycerate-independent phosphoglycerate mutase 1 (411 aa).

It belongs to the BPG-independent phosphoglycerate mutase family. A-PGAM subfamily. Homotetramer. Requires Mg(2+) as cofactor.

It catalyses the reaction (2R)-2-phosphoglycerate = (2R)-3-phosphoglycerate. Its pathway is carbohydrate degradation; glycolysis; pyruvate from D-glyceraldehyde 3-phosphate: step 3/5. Its activity is regulated as follows. Inhibited to approximately 20% by EDTA. Its function is as follows. Catalyzes the interconversion of 2-phosphoglycerate and 3-phosphoglycerate. The sequence is that of 2,3-bisphosphoglycerate-independent phosphoglycerate mutase 1 (apgM1) from Methanocaldococcus jannaschii (strain ATCC 43067 / DSM 2661 / JAL-1 / JCM 10045 / NBRC 100440) (Methanococcus jannaschii).